The primary structure comprises 630 residues: Chaperone protein HtpG (630 aa).

An a; substrate-binding region spans residues 1 to 339 (MKGQETRGFQ…SNDLPLNVSR (339 aa)). Positions 340 to 555 (EILQDNSITR…VDEMSTQMAK (216 aa)) are b. A c region spans residues 556-630 (LFAAAGQQVP…MNQLLLSEKA (75 aa)).

The protein belongs to the heat shock protein 90 family. In terms of assembly, homodimer.

The protein localises to the cytoplasm. Its function is as follows. Molecular chaperone. Has ATPase activity. This chain is Chaperone protein HtpG, found in Photorhabdus laumondii subsp. laumondii (strain DSM 15139 / CIP 105565 / TT01) (Photorhabdus luminescens subsp. laumondii).